The sequence spans 202 residues: MSCVPWKGDKVKSESLELPQAAPPQIYHEKQRRELCALHALNNVFQDSNAFTRETLQEIFQRLSPNTMVTPHKKSMLGNGNYDVNVIMAALQTKGYEAVWWDKRRDVGAIALTNVMGFIMNLPSSLCWGPLKLPLKRQHWICVREVGGAYYNLDSKLKMPEWIGGKSELRKFLKHHLRGKNCELLLVVPEEVEAHQSWRADV.

Ser-15 is modified (phosphoserine). The region spanning 23 to 202 (PPQIYHEKQR…EAHQSWRADV (180 aa)) is the Josephin domain. Cys-36 serves as the catalytic Nucleophile. His-139 (proton acceptor) is an active-site residue.

In terms of assembly, interacts with beta-actin/ACTB. In terms of processing, monoubiquitinated. Ubiquitination activates deubiquitination activity in vitro.

The protein resides in the cell membrane. The protein localises to the cytoplasm. The catalysed reaction is Thiol-dependent hydrolysis of ester, thioester, amide, peptide and isopeptide bonds formed by the C-terminal Gly of ubiquitin (a 76-residue protein attached to proteins as an intracellular targeting signal).. Functionally, deubiquitinates monoubiquitinated probes (in vitro). When ubiquitinated, cleaves 'Lys-63'-linked and 'Lys-48'-linked poly-ubiquitin chains (in vitro), hence may act as a deubiquitinating enzyme. May increase macropinocytosis and suppress clathrin- and caveolae-mediated endocytosis. May enhance membrane dynamics and cell motility independently of its catalytic activity. The protein is Josephin-1 (JOSD1) of Bos taurus (Bovine).